The primary structure comprises 506 residues: Transforming growth factor beta-1-induced transcript 1 protein (506 aa).

Positions 3 to 15 (DLDALLADLQITT) match the LD motif 1 motif. The interval 15–62 (TPPRCPVLLTDSPEKPQPTETRPPPPPYDPKTAMSNKTSDHETFPVDK) is disordered. Basic and acidic residues predominate over residues 52 to 62 (TSDHETFPVDK). Short sequence motifs (LD motif) lie at residues 87 to 99 (ELDRLLNELNATQ) and 139 to 150 (ELDRLMASLSDF). Disordered stretches follow at residues 154-201 (NTVS…PTPK) and 221-244 (SDEVTASRVPDSVSGSKVPEATSV). A compositionally biased stretch (basic and acidic residues) spans 168–177 (GSEEVSRPGD). The LD motif 4 motif lies at 248-260 (DLDSMLVKLQSGL). LIM zinc-binding domains follow at residues 271–330 (GLCE…LYAP), 331–388 (RCAL…RLFG), 389–448 (AVCA…RRGS), and 449–506 (LCAG…RLYG).

This sequence belongs to the paxillin family. As to quaternary structure, interacts with tcf3 and tcf7l2.

Its subcellular location is the cell junction. It is found in the focal adhesion. The protein localises to the nucleus matrix. It localises to the cytoplasm. The protein resides in the cytoskeleton. Functions as a molecular adapter coordinating multiple protein-protein interactions at the focal adhesion complex and in the nucleus. May regulate both Wnt and steroid signaling pathways and play a role in the processes of cell growth, proliferation, migration, differentiation and senescence. May have a zinc-dependent DNA-binding activity. This chain is Transforming growth factor beta-1-induced transcript 1 protein (tgfb1i1), found in Xenopus laevis (African clawed frog).